The chain runs to 230 residues: Heptaprenylglyceryl phosphate synthase (230 aa).

Position 12 (Lys-12) interacts with sn-glycerol 1-phosphate. Mg(2+) contacts are provided by Asp-14 and Thr-40. Residues 159–164, Gly-189, and 209–210 each bind sn-glycerol 1-phosphate; these read YIEYSG and GD.

The protein belongs to the GGGP/HepGP synthase family. Group I subfamily. Homodimer. Mg(2+) serves as cofactor.

The enzyme catalyses sn-glycerol 1-phosphate + all-trans-heptaprenyl diphosphate = 3-heptaprenyl-sn-glycero-1-phosphate + diphosphate. It participates in membrane lipid metabolism; glycerophospholipid metabolism. Prenyltransferase that catalyzes in vivo the transfer of the heptaprenyl moiety of heptaprenyl pyrophosphate (HepPP; 35 carbon atoms) to the C3 hydroxyl of sn-glycerol-1-phosphate (G1P), producing heptaprenylglyceryl phosphate (HepGP). This reaction is an ether-bond-formation step in the biosynthesis of archaea-type G1P-based membrane lipids found in Bacillales. The chain is Heptaprenylglyceryl phosphate synthase from Staphylococcus aureus (strain MRSA252).